Reading from the N-terminus, the 353-residue chain is Outer membrane protein A (353 aa).

The N-terminal stretch at 1–21 is a signal peptide; that stretch reads MKKTAIALAVALVGFATVAQA. The next 8 membrane-spanning stretches (beta stranded) occupy residues 27 to 37, 56 to 67, 71 to 79, 97 to 108, 113 to 121, 148 to 157, 162 to 169, and 188 to 196; these read TWYTGGKLGWS, QLGAGAFFGYQA, LGFEMGYDW, QGVQLAAKLSYP, LDVYTRLGG, PLVALGAEYA, WATRMEYQ, and LLSVGVSYR. A run of 4 repeats spans residues 208-209, 210-211, 212-213, and 214-215. A 4 X 2 AA approximate tandem repeats of A-P region spans residues 208-215; the sequence is APTPAPAP. Positions 217–345 constitute an OmpA-like domain; it reads VDTKRFTLKS…RVEIEVKGYK (129 aa). C318 and C330 form a disulfide bridge.

The protein belongs to the outer membrane OOP (TC 1.B.6) superfamily. OmpA family. In terms of assembly, monomer and homodimer.

The protein localises to the cell outer membrane. Its function is as follows. With TolR probably plays a role in maintaining the position of the peptidoglycan cell wall in the periplasm. Acts as a porin with low permeability that allows slow penetration of small solutes; an internal gate slows down solute passage. The polypeptide is Outer membrane protein A (Yersinia pseudotuberculosis serotype I (strain IP32953)).